Here is a 282-residue protein sequence, read N- to C-terminus: Protein OS-9 homolog (282 aa).

The signal sequence occupies residues 1–23 (MRITQILLCLVIVALSSSSHVWS). Asn-94 is a glycosylation site (N-linked (GlcNAc...) asparagine). Residues 120-239 (EKCLFRQEGW…TVQCPTLCKH (120 aa)) form the MRH domain. The cysteines at positions 122 and 135 are disulfide-linked. Positions 129, 130, and 142 each coordinate a mannooligosaccharide derivative. Residues Asn-169 and Asn-190 are each glycosylated (N-linked (GlcNAc...) asparagine). Disulfide bonds link Cys-194-Cys-225 and Cys-209-Cys-237. Residues Asp-195, Arg-201, Glu-221, and Tyr-227 each contribute to the a mannooligosaccharide derivative site. Over residues 262 to 276 (DATRNKEEQAVDESP) the composition is skewed to basic and acidic residues. Residues 262–282 (DATRNKEEQAVDESPKMIADS) are disordered.

The protein belongs to the OS-9 family. In terms of assembly, interacts with HRD3A.

It is found in the endoplasmic reticulum. Lectin which functions in endoplasmic reticulum (ER) quality control and ER-associated degradation (ERAD). May bind terminally misfolded non-glycosylated proteins as well as improperly folded glycoproteins, retain them in the ER, and possibly transfer them to the ubiquitination machinery and promote their degradation. Targets the misfolded LRR receptor kinase BRI1 and the misfolded receptor-like kinase EFR. In Arabidopsis thaliana (Mouse-ear cress), this protein is Protein OS-9 homolog.